A 608-amino-acid chain; its full sequence is Formate hydrogenlyase subunit 3 (608 aa).

Transmembrane regions (helical) follow at residues 10 to 26, 44 to 67, 76 to 93, 116 to 140, 153 to 173, 197 to 218, 229 to 251, 258 to 280, 296 to 312, 416 to 440, 453 to 476, and 502 to 521; these read GVAWFVAAAVLAFLFSF, LYTAAAGFTVLTGAVGVSGALSLV, LNAIWLITLGLCGLFVSL, AAAVCAVIASNLGMFVVMAEIMALC, LWFALGRLGTLLLAIACWLLW, IWLLGVIGFGLLAGIIPLHGWV, AAALFSTVVMKIGLLGILTLSLL, WWGIALLVLGMITAFVGGLYALV, IGIILLGLGAGVTGIAL, LAVGLAITGALAVMCMAKVYGVTFL, CAPLLMSVSVVALAICCVIGGVAA, and MITLLLIACPLLPFIIMAIC.

Belongs to the complex I subunit 4 family. FHL comprises of a formate dehydrogenase, unidentified electron carriers and a hydrogenase (isoenzyme 3). In this non-energy conserving pathway molecular hydrogen and carbodioxide from formate are released.

It localises to the cell inner membrane. The sequence is that of Formate hydrogenlyase subunit 3 (hycC) from Escherichia coli (strain K12).